The chain runs to 431 residues: Gamma-glutamyl phosphate reductase (431 aa).

The protein belongs to the gamma-glutamyl phosphate reductase family.

It localises to the cytoplasm. The enzyme catalyses L-glutamate 5-semialdehyde + phosphate + NADP(+) = L-glutamyl 5-phosphate + NADPH + H(+). The protein operates within amino-acid biosynthesis; L-proline biosynthesis; L-glutamate 5-semialdehyde from L-glutamate: step 2/2. Catalyzes the NADPH-dependent reduction of L-glutamate 5-phosphate into L-glutamate 5-semialdehyde and phosphate. The product spontaneously undergoes cyclization to form 1-pyrroline-5-carboxylate. The sequence is that of Gamma-glutamyl phosphate reductase from Bifidobacterium longum subsp. infantis (strain ATCC 15697 / DSM 20088 / JCM 1222 / NCTC 11817 / S12).